Here is a 505-residue protein sequence, read N- to C-terminus: DEAD-box ATP-dependent RNA helicase 8 (505 aa).

The tract at residues 1 to 85 (MNNRGRYPPG…GQIPGGNSNG (85 aa)) is disordered. Polar residues predominate over residues 20–31 (PNPNYQSRSGYQ). Residues 43–71 (NYAQNHQQQFQQAPSQPHQYQQQQQQQQQ) show a composition bias toward low complexity. The Q motif signature appears at 131–159 (NEFEDYFLKRELLMGIYEKGFERPSPIQE). Residues 162–332 (IPIALTGRDI…DRFLTNPYVI (171 aa)) form the Helicase ATP-binding domain. 175 to 182 (AKNGTGKT) is an ATP binding site. Residue threonine 237 is modified to Phosphothreonine. The DEAD box motif lies at 280-283 (DEAD). One can recognise a Helicase C-terminal domain in the interval 342 to 502 (GITQFYAFVE…QIPPHIDQAI (161 aa)).

This sequence belongs to the DEAD box helicase family. DDX6/DHH1 subfamily.

Its subcellular location is the cytoplasm. It localises to the P-body. The enzyme catalyses ATP + H2O = ADP + phosphate + H(+). Its function is as follows. ATP-dependent RNA helicase involved in mRNA turnover, and more specifically in mRNA decapping. This chain is DEAD-box ATP-dependent RNA helicase 8 (RH8), found in Arabidopsis thaliana (Mouse-ear cress).